A 76-amino-acid chain; its full sequence is Small ribosomal subunit protein bS18 (76 aa).

Belongs to the bacterial ribosomal protein bS18 family. As to quaternary structure, part of the 30S ribosomal subunit. Forms a tight heterodimer with protein bS6.

Functionally, binds as a heterodimer with protein bS6 to the central domain of the 16S rRNA, where it helps stabilize the platform of the 30S subunit. The protein is Small ribosomal subunit protein bS18 of Pseudomonas aeruginosa (strain LESB58).